Reading from the N-terminus, the 236-residue chain is MLQIILRRLMKALLWFAAGSALVVLVLRWVPPPGTALMVERKVESWFDGEPIDLQRDWEPWDKISNNLKIAVIAGEDQKFAEHWGFDVDAIQAAILHNEQGGSIRGASTLSQQVSKNLFLWSGRSYLRKGLEAWFTMLIELLWSKERILEVYLNSVEWDEGIFGAQAAAQHHFRTNASALSEQQASYLAAVLPNPRQWSASHPSGYVSRRAGWIRQQMRQLGGDEYLQGLNSSRRW.

Residues 12–31 (ALLWFAAGSALVVLVLRWVP) form a helical membrane-spanning segment.

This sequence belongs to the glycosyltransferase 51 family.

It is found in the cell inner membrane. It carries out the reaction [GlcNAc-(1-&gt;4)-Mur2Ac(oyl-L-Ala-gamma-D-Glu-L-Lys-D-Ala-D-Ala)](n)-di-trans,octa-cis-undecaprenyl diphosphate + beta-D-GlcNAc-(1-&gt;4)-Mur2Ac(oyl-L-Ala-gamma-D-Glu-L-Lys-D-Ala-D-Ala)-di-trans,octa-cis-undecaprenyl diphosphate = [GlcNAc-(1-&gt;4)-Mur2Ac(oyl-L-Ala-gamma-D-Glu-L-Lys-D-Ala-D-Ala)](n+1)-di-trans,octa-cis-undecaprenyl diphosphate + di-trans,octa-cis-undecaprenyl diphosphate + H(+). Its pathway is cell wall biogenesis; peptidoglycan biosynthesis. Functionally, peptidoglycan polymerase that catalyzes glycan chain elongation from lipid-linked precursors. The sequence is that of Biosynthetic peptidoglycan transglycosylase from Pseudomonas syringae pv. tomato (strain ATCC BAA-871 / DC3000).